A 355-amino-acid chain; its full sequence is Probable butyrate kinase (355 aa).

This sequence belongs to the acetokinase family.

It localises to the cytoplasm. The catalysed reaction is butanoate + ATP = butanoyl phosphate + ADP. The chain is Probable butyrate kinase from Listeria innocua serovar 6a (strain ATCC BAA-680 / CLIP 11262).